Consider the following 407-residue polypeptide: Imidazolonepropionase (407 aa).

Fe(3+) contacts are provided by histidine 74 and histidine 76. 2 residues coordinate Zn(2+): histidine 74 and histidine 76. The 4-imidazolone-5-propanoate site is built by arginine 83, tyrosine 146, and histidine 179. Residue tyrosine 146 coordinates N-formimidoyl-L-glutamate. Histidine 244 contacts Fe(3+). Histidine 244 lines the Zn(2+) pocket. 4-imidazolone-5-propanoate is bound at residue glutamine 247. Fe(3+) is bound at residue aspartate 319. Residue aspartate 319 coordinates Zn(2+). Residues asparagine 321 and glycine 323 each contribute to the N-formimidoyl-L-glutamate site. Threonine 324 is a binding site for 4-imidazolone-5-propanoate.

This sequence belongs to the metallo-dependent hydrolases superfamily. HutI family. Requires Zn(2+) as cofactor. Fe(3+) serves as cofactor.

Its subcellular location is the cytoplasm. The enzyme catalyses 4-imidazolone-5-propanoate + H2O = N-formimidoyl-L-glutamate. The protein operates within amino-acid degradation; L-histidine degradation into L-glutamate; N-formimidoyl-L-glutamate from L-histidine: step 3/3. Functionally, catalyzes the hydrolytic cleavage of the carbon-nitrogen bond in imidazolone-5-propanoate to yield N-formimidoyl-L-glutamate. It is the third step in the universal histidine degradation pathway. The sequence is that of Imidazolonepropionase from Salmonella paratyphi A (strain ATCC 9150 / SARB42).